A 567-amino-acid chain; its full sequence is Sporulation-specific protein 5 (567 aa).

Positions M1 to S18 are enriched in polar residues. Disordered regions lie at residues M1–N39 and I52–N76. The span at P21–T35 shows a compositional bias: low complexity. The segment covering P56 to S66 has biased composition (polar residues). 2 RRM domains span residues R296 to D380 and T384 to S462.

Its subcellular location is the cytoplasm. RNA-binding protein which plays a role in sporulation. Regulates the progression of meiosis I and may function in the vicinity of the Mei2 dot. This Schizosaccharomyces pombe (strain 972 / ATCC 24843) (Fission yeast) protein is Sporulation-specific protein 5 (spo5).